The chain runs to 320 residues: Pyrroline-5-carboxylate reductase 2 (320 aa).

Serine 2 is subject to N-acetylserine. Residues isoleucine 6–leucine 11 and serine 34 contribute to the NADP(+) site. NADPH is bound by residues alanine 8, glutamine 10, leucine 11, serine 34, glutamate 36, asparagine 56, valine 70, lysine 71, and alanine 97. NADP(+) is bound by residues asparagine 56, alanine 69 to proline 72, and cysteine 95 to alanine 97. Residue glutamate 164 coordinates L-proline. Residue asparagine 230 coordinates NADPH. The L-proline site is built by alanine 237 and threonine 238. Residues proline 295–proline 305 show a composition bias toward low complexity. Positions proline 295–aspartate 320 are disordered. Phosphoserine is present on serine 304.

Belongs to the pyrroline-5-carboxylate reductase family. In terms of assembly, homodecamer; composed of 5 homodimers. Interacts with LTO1.

Its subcellular location is the cytoplasm. It localises to the mitochondrion. It catalyses the reaction L-proline + NADP(+) = (S)-1-pyrroline-5-carboxylate + NADPH + 2 H(+). The enzyme catalyses L-proline + NAD(+) = (S)-1-pyrroline-5-carboxylate + NADH + 2 H(+). It functions in the pathway amino-acid biosynthesis; L-proline biosynthesis; L-proline from L-glutamate 5-semialdehyde: step 1/1. Oxidoreductase that catalyzes the last step in proline biosynthesis, which corresponds to the reduction of pyrroline-5-carboxylate to L-proline using NAD(P)H. At physiologic concentrations, has higher specific activity in the presence of NADH. Involved in cellular response to oxidative stress. In some cell types, such as erythrocytes, its primary function may be the generation of NADP(+). This Macaca fascicularis (Crab-eating macaque) protein is Pyrroline-5-carboxylate reductase 2 (PYCR2).